The chain runs to 554 residues: Solute carrier family 22 member 1 (554 aa).

The Cytoplasmic portion of the chain corresponds to 1 to 24 (MPSVDDVLEQVGEFGWFQKQAFLN). A helical membrane pass occupies residues 25–45 (LCLTSVAFAPIYVGIVFLGFT). The Extracellular segment spans residues 46-234 (PDHRCRSPGV…EFVGLGYRKT (189 aa)). The N-linked (GlcNAc...) asparagine glycan is linked to Asn-71. The chain crosses the membrane as a helical span at residues 235–255 (VAILYQTAFSVGLVLLSGLAY). Over 256-261 (AVPHWR) the chain is Cytoplasmic. A helical membrane pass occupies residues 262-282 (SLQLAVSLPIFLLLLCYWFVP). The Proline-rich sequence motif lies at 282 to 286 (PESPR). Topologically, residues 283 to 347 (ESPRWLLSQK…FRTQNLRKYT (65 aa)) are extracellular. Ser-333 bears the Phosphoserine mark. A helical membrane pass occupies residues 348–368 (FILMYLWFTSSVLYQGLIMHV). Over 369 to 376 (GATGGSLY) the chain is Cytoplasmic. A helical membrane pass occupies residues 377–397 (LDFLYSALVEFPAAFVILLII). Over 398–402 (DRFGR) the chain is Extracellular. The chain crosses the membrane as a helical span at residues 403–423 (LYLLAGSNLLAGAACFFMIFI). The Cytoplasmic segment spans residues 424 to 431 (SHDLHWLS). A helical membrane pass occupies residues 432–452 (IVAACIGRMGITIVFQMVCLV). Topologically, residues 453–464 (SAELYPTFIRNL) are extracellular. A helical membrane pass occupies residues 465–485 (GVMVCSSLCDLGGVVAPFLVF). The Cytoplasmic portion of the chain corresponds to 486 to 492 (RLTEVWR). A helical transmembrane segment spans residues 493-513 (GLPLVLFAALGLVAGGMSLLL). At 514-554 (PETKGVALPETIEEVERLGRKAKPRDNMIYLQVKMPEPAGL) the chain is on the extracellular side.

It belongs to the major facilitator (TC 2.A.1) superfamily. Organic cation transporter (TC 2.A.1.19) family. In terms of processing, phosphorylated.

It localises to the basolateral cell membrane. It is found in the apical cell membrane. Its subcellular location is the lateral cell membrane. The protein resides in the basal cell membrane. The protein localises to the cell membrane. It catalyses the reaction 1-methylnicotinamide(out) = 1-methylnicotinamide(in). It carries out the reaction dopamine(out) = dopamine(in). The catalysed reaction is serotonin(out) = serotonin(in). The enzyme catalyses (R)-adrenaline(out) = (R)-adrenaline(in). It catalyses the reaction (R)-noradrenaline(out) = (R)-noradrenaline(in). It carries out the reaction histamine(out) = histamine(in). The catalysed reaction is guanidine(out) = guanidine(in). The enzyme catalyses choline(out) = choline(in). It catalyses the reaction acetylcholine(in) = acetylcholine(out). It carries out the reaction thiamine(in) = thiamine(out). The catalysed reaction is spermidine(in) = spermidine(out). The enzyme catalyses agmatine(out) = agmatine(in). It catalyses the reaction putrescine(out) = putrescine(in). It carries out the reaction (R)-carnitine(in) = (R)-carnitine(out). The catalysed reaction is O-isobutanoyl-(R)-carnitine(in) = O-isobutanoyl-(R)-carnitine(out). The enzyme catalyses O-acetyl-(R)-carnitine(in) = O-acetyl-(R)-carnitine(out). It catalyses the reaction O-3-hydroxybutanoyl-(R)-carnitine(in) = O-3-hydroxybutanoyl-(R)-carnitine(out). It carries out the reaction O-propanoyl-(R)-carnitine(in) = O-propanoyl-(R)-carnitine(out). The catalysed reaction is O-butanoyl-(R)-carnitine(in) = O-butanoyl-(R)-carnitine(out). The enzyme catalyses O-2-methylbutanoyl-(R)-carnitine(in) = O-2-methylbutanoyl-(R)-carnitine(out). It catalyses the reaction O-3-methylbutanoyl-(R)-carnitine(in) = O-3-methylbutanoyl-(R)-carnitine(out). It carries out the reaction O-hexanoyl-(R)-carnitine(in) = O-hexanoyl-(R)-carnitine(out). The catalysed reaction is L-histidyl-L-proline diketopiperazine(in) = L-histidyl-L-proline diketopiperazine(out). The enzyme catalyses (R)-salsolinol(in) = (R)-salsolinol(out). It catalyses the reaction prostaglandin F2alpha(out) = prostaglandin F2alpha(in). It carries out the reaction prostaglandin E2(out) = prostaglandin E2(in). Phosphorylation of the transporter leads to changes in its substrate affinity, resulting in a regulation of the transport activity. In contrast with rat ortholog, ASP uptake is inhibited by protein kinase A (PKA) and C (PKC) activation. ASP uptake is also endogenously activated by calmodulin, the calmodulin-dependent kinase II and LCK tyrosine kinase. Inhibited by cGMP, most likely through a cGMP-binding protein that interacts with OCT1. Its function is as follows. Electrogenic voltage-dependent transporter that mediates the transport of a variety of organic cations such as endogenous bioactive amines, cationic drugs and xenobiotics. Functions as a pH- and Na(+)-independent, bidirectional transporter. Cation cellular uptake or release is driven by the electrochemical potential (i.e. membrane potential and concentration gradient) and substrate selectivity. Hydrophobicity is a major requirement for recognition in polyvalent substrates and inhibitors. Primarily expressed in the basolateral membrane of hepatocytes and proximal tubules and involved in the uptake and disposition of cationic compounds from the blood by hepatic and renal clearance. Most likely functions as an uptake carrier in enterocytes contributing to the intestinal elimination of organic cations from the systemic circulation. Transports endogenous monoamines such as N-1-methylnicotinamide (NMN), guanidine, neurotransmitters dopamine, serotonin, noradrenaline, adrenaline and histamine, and quaternary ammonium compound such as choline. Also transports natural polyamines such as spermidine, agmatine and putrescine at low affinity, but relatively high turnover. Involved in the hepatic and intestinal uptake of the vitamin B1/thiamine, hence regulating hepatic lipid and energy metabolism. Contributes to the influx and efflux of fatty acid carriers carnitines and acylcarnitines across the basolateral membrane of hepatocytes, from the liver to the systemic circulation and inversely and may be involved in regulating the systemic availability of hepatic acylcarnitines. Also capable of transporting non-amine endogenous compounds such as prostaglandin E2 (PGE2) and prostaglandin F2-alpha (PGF2-alpha). May contribute to the transport of cationic compounds in testes across the blood-testis-barrier. Also mediates the uptake of xenobiotics tributylmethylammonium (TBuMA), quinidine, N-methyl-quinine (NMQ), N-methyl-quinidine (NMQD) N-(4,4-azo-n-pentyl)-quinuclidine (APQ), azidoprocainamide methoiodide (AMP), N-(4,4-azo-n-pentyl)-21-deoxyajmalinium (APDA) and 4-(4-(dimethylamino)styryl)-N-methylpyridinium (ASP). This is Solute carrier family 22 member 1 (SLC22A1) from Sus scrofa (Pig).